A 469-amino-acid polypeptide reads, in one-letter code: Origin recognition complex subunit 6 (469 aa).

Composition is skewed to low complexity over residues 218 to 234 and 275 to 308; these read SSTL…TAPK and ATPT…LSST. Disordered stretches follow at residues 218 to 241, 275 to 309, 356 to 423, and 436 to 469; these read SSTL…PIPS, ATPT…SSTN, ESPF…EGDL, and KEQQ…SFFK. Composition is skewed to basic and acidic residues over residues 380–390 and 409–423; these read SRDELEKESEL and QKEK…EGDL. The span at 454 to 469 shows a compositional bias: polar residues; it reads TPVNATKQLTLDSFFK.

This sequence belongs to the ORC6 family. ORC is composed of six subunits.

It is found in the nucleus. Its function is as follows. Component of the origin recognition complex (ORC) that binds origins of replication. DNA-binding is ATP-dependent, however specific DNA sequences that define origins of replication have not been identified so far. ORC is required to assemble the pre-replication complex necessary to initiate DNA replication. The protein is Origin recognition complex subunit 6 (orcF) of Dictyostelium discoideum (Social amoeba).